Here is a 309-residue protein sequence, read N- to C-terminus: Testis-expressed protein 264 homolog (309 aa).

Topologically, residues 1–3 (MPD) are lumenal. A helical; Signal-anchor for type III membrane protein membrane pass occupies residues 4–24 (LLLLGLIGALTLLLLLTLLAF). Residues 25–309 (AGYSGLLTGV…ELSTPERGEE (285 aa)) lie on the Cytoplasmic side of the membrane. The segment at 193-309 (PEVKETERKC…ELSTPERGEE (117 aa)) is disordered. Over residues 208-225 (ATDTQTDGTGADTSDASS) the composition is skewed to low complexity. Residues Ser-238 and Ser-243 each carry the phosphoserine modification. The segment covering 250–262 (GWDDGDNRSEHSY) has biased composition (basic and acidic residues). Low complexity predominate over residues 263–272 (SESGASGSSF). The LIR motif signature appears at 272–275 (FEEL).

Interacts (via the LIR motif) with ATG8 family proteins MAP1LC3A, MAP1LC3B, GABARAP and GABARAPL1. Interacts with VCP/p97; bridging VCP/p97 to covalent DNA-protein cross-links (DPCs). Interacts with TOP1 (when sumoylated).

It localises to the endoplasmic reticulum membrane. Its subcellular location is the cytoplasmic vesicle. It is found in the autophagosome. The protein localises to the cytoplasm. The protein resides in the cytosol. It localises to the nucleus. Its subcellular location is the chromosome. Functionally, major reticulophagy (also called ER-phagy) receptor that acts independently of other candidate reticulophagy receptors to remodel subdomains of the endoplasmic reticulum into autophagosomes upon nutrient stress, which then fuse with lysosomes for endoplasmic reticulum turnover. The ATG8-containing isolation membrane (IM) cradles a tubular segment of TEX264-positive ER near a three-way junction, allowing the formation of a synapse of 2 juxtaposed membranes with trans interaction between the TEX264 and ATG8 proteins. Expansion of the IM would extend the capture of ER, possibly through a 'zipper-like' process involving continued trans TEX264-ATG8 interactions, until poorly understood mechanisms lead to the fission of relevant membranes and, ultimately, autophagosomal membrane closure. Also involved in the repair of covalent DNA-protein cross-links (DPCs) during DNA synthesis: acts by bridging VCP/p97 to covalent DNA-protein cross-links (DPCs) and initiating resolution of DPCs by SPRTN. The chain is Testis-expressed protein 264 homolog from Mus musculus (Mouse).